The sequence spans 1271 residues: MEGESTESTQNTKVSDSAYSNSCSNSQSQRSGSSKSMLSGSHSSGSSGYGGKPSIQTSSSDMAIKRNKEKSRKKKKAKCTQAQATISSSLEGAEEQPHSSGTTCDQKILHVLATTQQLGDQPSSLDHKLGEQLEARHNCGVGKAEQPQSFSLPCPLSVSTLMPGIGVCHGGNAPGGKWEKTFESCKLDTGPAKTERVKEDSFCCVISMHDGIVLYTTPSITDVLGFPRDMWLGRSFIDFVHTKDRATFASQITTGIPIAESRCSMPKDARSTFCVMLRQYRGLQTSGYGVIGRSVNYEPFRLGMSFREAPEEERSDNYMVANSSNMLLVICATPIKSSYRVPEEIHSQRSPKFAIRHTAAGIISHVDSAAVSALGYLPQDLMGRSIMDLYHHDDLPVIKEIYESVMKKGQTAGASFCSKPYRFLIQNGCYILLETEWSSFVNPWSRKLEFVVGHHRVFQGPKICNVFETPPNSEPKIAEELQNKNTRIKEEIVNLLAEKVSRPSDTVKQEVSRRCQALASFMETLMDEVSRADLKLELPHENELTVSERDSVMLGEISPHHDYYDSKSSIETPPSYNQLNYNENLLRFFNSKPVTAPVEVDPPKVGSSDVSSTREDARSTLSPLNGFEGSGASGSSGHLTSGSNIHMSSATNTSNAGTGTGTVTGTGTIIATSGTGTVTCASGNMDANTSAAFNIAANTSAADNFGADTSAADTSGADTSAADNYAVDNYGPGNFGAENSCADNSGAENSCADNSGVDNSRPGNSGADNSAADNFGADNSGPDNSGADNSGPDNTGPDNSGAENSRAENSRADNSRPDHPRPDISGASNSRPDKTGPDKSGAENSASGSGSGTSGNEGPSSGGQDTRTTAGTPDSPPVSLTESLLNKHNDEMEKFMLKKHRESRGDRRTVEKNKNKTTNTIDSLKILEYSSTGPGHGTKRGGSYSWEGEGNKPKQQPTLNSVGVGTGAPEAPIPPVHPTHTTHTAIAQSSFSAQQSLFPTFYYIPATPLAASTPAPGALSPTPRNQKHHHHAHQHAPKVPDQASTSQQAAGPAAIPLQYVTGVMYPHPSLFYTHPAAAAATAMMYQPMPFPGIANAMQLPEQPSTSQSNYSKTVFSVIVAPPTITTTTATTTPKTQGAFHSITPAQLQRPSSQDTSVKTEPASNATPSHSSNKKKANSSIASGIGDYNSNQACSRNRANVKKYTDSNGNSDDMDGSSFSSFYSSFIKTTDGSESPPDNDKEAKHRKLKNITRLSSKIMEHPEEDQTQHGDG.

A compositionally biased stretch (polar residues) spans 1–14 (MEGESTESTQNTKV). The disordered stretch occupies residues 1–102 (MEGESTESTQ…AEEQPHSSGT (102 aa)). Residues 15–46 (SDSAYSNSCSNSQSQRSGSSKSMLSGSHSSGS) show a composition bias toward low complexity. Residues 65–78 (KRNKEKSRKKKKAK) carry the Nuclear localization signal motif. Over residues 65–78 (KRNKEKSRKKKKAK) the composition is skewed to basic residues. The span at 80–90 (TQAQATISSSL) shows a compositional bias: polar residues. PAS domains are found at residues 189 to 259 (TGPA…IPIA) and 339 to 409 (YRVP…MKKG). The interval 596–660 (APVEVDPPKV…TNTSNAGTGT (65 aa)) is disordered. 3 tandem repeats follow at residues 657–658 (GT), 659–660 (GT), and 661–662 (GT). The 8 X 2 AA approximate tandem repeats of G-T stretch occupies residues 657–677 (GTGTGTVTGTGTIIATSGTGT). One copy of the 4; approximate repeat lies at 663 to 664 (VT). A run of 4 repeats spans residues 665-666 (GT), 667-668 (GT), 674-675 (GT), and 676-677 (GT). Composition is skewed to polar residues over residues 746-772 (GAEN…NSAA) and 781-803 (GPDN…SGAE). Disordered regions lie at residues 746-913 (GAEN…VEKN), 928-956 (EYSS…PKQQ), 1014-1050 (PAPG…QQAA), 1143-1191 (TPAQ…NSNQ), and 1227-1271 (KTTD…HGDG). 2 stretches are compositionally biased toward basic and acidic residues: residues 805-822 (SRAE…HPRP) and 831-841 (RPDKTGPDKSG). Polar residues predominate over residues 864 to 884 (QDTRTTAGTPDSPPVSLTESL). Composition is skewed to basic and acidic residues over residues 885-896 (LNKHNDEMEKFM) and 903-913 (SRGDRRTVEKN). Residues 1014–1023 (PAPGALSPTP) show a composition bias toward low complexity. Residues 1025–1036 (NQKHHHHAHQHA) are compositionally biased toward basic residues. The segment covering 1143–1167 (TPAQLQRPSSQDTSVKTEPASNATP) has biased composition (polar residues). Over residues 1257-1271 (IMEHPEEDQTQHGDG) the composition is skewed to basic and acidic residues.

Forms a heterodimer with timeless (TIM); the complex then translocates into the nucleus. In terms of processing, phosphorylated with a circadian rhythmicity, probably by the double-time protein (dbt). Phosphorylation could be implicated in the stability of per monomer and in the formation of heterodimer per-tim.

It localises to the nucleus. The protein resides in the cytoplasm. It is found in the perinuclear region. Essential for biological clock functions. Determines the period length of circadian and ultradian rhythms; an increase in PER dosage leads to shortened circadian rhythms and a decrease leads to lengthened circadian rhythms. Essential for the circadian rhythmicity of locomotor activity, eclosion behavior, and for the rhythmic component of the male courtship song that originates in the thoracic nervous system. The biological cycle depends on the rhythmic formation and nuclear localization of the TIM-PER complex. Light induces the degradation of TIM, which promotes elimination of PER. Nuclear activity of the heterodimer coordinatively regulates PER and TIM transcription through a negative feedback loop. Behaves as a negative element in circadian transcriptional loop. Does not appear to bind DNA, suggesting indirect transcriptional inhibition. In Drosophila pseudoobscura pseudoobscura (Fruit fly), this protein is Period circadian protein (per).